We begin with the raw amino-acid sequence, 20 residues long: Hongotoxin-5 (20 aa).

The protein belongs to the short scorpion toxin superfamily. Potassium channel inhibitor family. Alpha-KTx 02 subfamily. In terms of tissue distribution, expressed by the venom gland.

It localises to the secreted. Functionally, potent selective inhibitor of Kv1/KCNA voltage-gated potassium channels. The protein is Hongotoxin-5 of Centruroides limbatus (Bark scorpion).